Reading from the N-terminus, the 56-residue chain is Large ribosomal subunit protein bL32 (56 aa).

Residues methionine 1 to arginine 39 form a disordered region. A compositionally biased stretch (basic residues) spans lysine 7–arginine 16. Positions serine 21–alanine 31 are enriched in polar residues.

It belongs to the bacterial ribosomal protein bL32 family.

This Shewanella piezotolerans (strain WP3 / JCM 13877) protein is Large ribosomal subunit protein bL32.